We begin with the raw amino-acid sequence, 395 residues long: S-adenosylmethionine synthase (395 aa).

ATP is bound at residue H16. D18 is a binding site for Mg(2+). E44 lines the K(+) pocket. L-methionine-binding residues include E57 and Q100. The interval 100–110 (QSPDIAQGVDD) is flexible loop. Residues 174-176 (DAK), 241-242 (RF), D250, 256-257 (RK), A273, and K277 contribute to the ATP site. Residue D250 participates in L-methionine binding. K281 contributes to the L-methionine binding site.

It belongs to the AdoMet synthase family. In terms of assembly, homotetramer; dimer of dimers. The cofactor is Mg(2+). K(+) is required as a cofactor.

Its subcellular location is the cytoplasm. It carries out the reaction L-methionine + ATP + H2O = S-adenosyl-L-methionine + phosphate + diphosphate. The protein operates within amino-acid biosynthesis; S-adenosyl-L-methionine biosynthesis; S-adenosyl-L-methionine from L-methionine: step 1/1. In terms of biological role, catalyzes the formation of S-adenosylmethionine (AdoMet) from methionine and ATP. The overall synthetic reaction is composed of two sequential steps, AdoMet formation and the subsequent tripolyphosphate hydrolysis which occurs prior to release of AdoMet from the enzyme. The chain is S-adenosylmethionine synthase from Limosilactobacillus reuteri (strain DSM 20016) (Lactobacillus reuteri).